A 950-amino-acid chain; its full sequence is UPF0182 protein P9303_14611 (950 aa).

The next 9 helical transmembrane spans lie at 20–40 (LLLS…WLWF), 53–73 (WLWQ…CQLW), 102–122 (LLGC…LAWL), 141–161 (IWAL…MLGN), 173–193 (CFCF…ALAI), 209–229 (FGLG…AQLV), 259–279 (CDVM…LLWL), 308–328 (SLAS…PWIQ), and 335–355 (LIAS…APFV).

The protein belongs to the UPF0182 family.

It localises to the cell membrane. In Prochlorococcus marinus (strain MIT 9303), this protein is UPF0182 protein P9303_14611.